A 131-amino-acid polypeptide reads, in one-letter code: MKKIEKTLDEWRSMLDPEQYQVCRLKGTERPFSGKYNSERRDGIYHCICCGLPLFDAQTKFDAGCGWPSFYAPIEDSAMIEIRDTSHGMIRTEVTCARCDAHLGHVFPDGPPPTGLRYCINSVCIDLRPRD.

Residues 8-130 (LDEWRSMLDP…NSVCIDLRPR (123 aa)) enclose the MsrB domain. Residues C47, C50, C96, and C99 each coordinate Zn(2+). Catalysis depends on C119, which acts as the Nucleophile.

This sequence belongs to the MsrB Met sulfoxide reductase family. It depends on Zn(2+) as a cofactor.

It catalyses the reaction L-methionyl-[protein] + [thioredoxin]-disulfide + H2O = L-methionyl-(R)-S-oxide-[protein] + [thioredoxin]-dithiol. In Pseudomonas putida (strain ATCC 47054 / DSM 6125 / CFBP 8728 / NCIMB 11950 / KT2440), this protein is Peptide methionine sulfoxide reductase MsrB.